Reading from the N-terminus, the 225-residue chain is UPF0758 protein BcerKBAB4_4299 (225 aa).

Residues 103–225 (SIRSPEDCAS…FVSLKEKGHI (123 aa)) form the MPN domain. 3 residues coordinate Zn(2+): histidine 174, histidine 176, and aspartate 187. A JAMM motif motif is present at residues 174–187 (HNHPSGDPAPSRED).

It belongs to the UPF0758 family.

This Bacillus mycoides (strain KBAB4) (Bacillus weihenstephanensis) protein is UPF0758 protein BcerKBAB4_4299.